We begin with the raw amino-acid sequence, 128 residues long: Glycine cleavage system H protein (128 aa).

A Lipoyl-binding domain is found at 25 to 107 (IITVGITHHA…YGAGWFFKLK (83 aa)). Position 66 is an N6-lipoyllysine (Lys-66).

It belongs to the GcvH family. In terms of assembly, the glycine cleavage system is composed of four proteins: P, T, L and H. (R)-lipoate is required as a cofactor.

The glycine cleavage system catalyzes the degradation of glycine. The H protein shuttles the methylamine group of glycine from the P protein to the T protein. This is Glycine cleavage system H protein from Neisseria meningitidis serogroup A / serotype 4A (strain DSM 15465 / Z2491).